Consider the following 393-residue polypeptide: METFLFTSESVNEGHPDKLCDQISDAVLDACLEQDPDSKVACETCTKTNMVMVFGEITTKATVDYEKIVRDTCRSIGFISDDVGLDADKCKVLVNIEQQSPDIAQGVHGHFTKRPEDIGAGDQGHMFGYATDETPELMPLSHVLATKIGAKLTEVRKNGTCRWLRPNGKTQVTGEYYNDNGAMVPVRVHTVLISTQHDETVTNDEIARDLKEHVIKPIIPEKYLDDKTIFHLNPSGRFVIGGPHGDAGLTGRKIIIDTYGGWGAHGGGAFSGKDPTKVDRSGAYIVRQAAKSVVANGMARRALVQVSYAIGVPEPLSVFVDTYGTGLIPDKEILKIVKESFDFRPGMMTINLDLKRGGNGRFLKTAAYGHFGRDDPDFTWEVVKPLKWDKPQA.

Glutamate 9 contributes to the Mg(2+) binding site. Residue histidine 15 coordinates ATP. Glutamate 43 contributes to the K(+) binding site. Residues glutamate 56 and glutamine 99 each coordinate L-methionine. ATP is bound by residues 167–169 (NGK), 235–238 (SGRF), aspartate 246, 252–253 (RK), alanine 269, lysine 273, and lysine 277. Aspartate 246 contacts L-methionine. Lysine 277 serves as a coordination point for L-methionine.

Belongs to the AdoMet synthase family. Homotetramer. It depends on Mn(2+) as a cofactor. Requires Mg(2+) as cofactor. Co(2+) is required as a cofactor. The cofactor is K(+). In terms of tissue distribution, mostly expressed in flowers, seedpods and roots, and, to a lower extent, in stems and leaves.

It is found in the cytoplasm. The enzyme catalyses L-methionine + ATP + H2O = S-adenosyl-L-methionine + phosphate + diphosphate. It participates in amino-acid biosynthesis; S-adenosyl-L-methionine biosynthesis; S-adenosyl-L-methionine from L-methionine: step 1/1. Functionally, catalyzes the formation of S-adenosylmethionine from methionine and ATP. The reaction comprises two steps that are both catalyzed by the same enzyme: formation of S-adenosylmethionine (AdoMet) and triphosphate, and subsequent hydrolysis of the triphosphate. The protein is S-adenosylmethionine synthase 3 (MSAMS3) of Brassica juncea (Indian mustard).